Reading from the N-terminus, the 347-residue chain is D-alanine--D-alanine ligase (347 aa).

The region spanning 133 to 342 is the ATP-grasp domain; that stretch reads KQAFAQASLP…FPDLVHRLIQ (210 aa). 169-224 is a binding site for ATP; sequence ETELGYPCFVKPANLGSSVGIAKVRDRAELEAALDQAAALDRRLIIEAAIDNPREV. Residues aspartate 296, glutamate 309, and asparagine 311 each coordinate Mg(2+).

The protein belongs to the D-alanine--D-alanine ligase family. It depends on Mg(2+) as a cofactor. Mn(2+) is required as a cofactor.

The protein resides in the cytoplasm. It catalyses the reaction 2 D-alanine + ATP = D-alanyl-D-alanine + ADP + phosphate + H(+). It functions in the pathway cell wall biogenesis; peptidoglycan biosynthesis. Functionally, cell wall formation. This is D-alanine--D-alanine ligase from Synechococcus elongatus (strain ATCC 33912 / PCC 7942 / FACHB-805) (Anacystis nidulans R2).